The sequence spans 361 residues: Dynein axonemal assembly factor 8 (361 aa).

Disordered stretches follow at residues 65–191 (DPAG…ERRK) and 309–334 (AQPG…RRPL). A compositionally biased stretch (polar residues) spans 136–157 (TLNTSASQSPRQGPQGEATRSP). Phosphoserine occurs at positions 142 and 144. Low complexity predominate over residues 321 to 334 (GSSSSSGHLGRRPL).

The protein localises to the dynein axonemal particle. It is found in the cytoplasm. In cyliated cells, dynein axonemal particle-specific protein required for deployment of ODA to the axoneme. Interacts with outer dynein arm (ODA) subunits. This chain is Dynein axonemal assembly factor 8 (DNAAF8), found in Bos taurus (Bovine).